The sequence spans 389 residues: P2X purinoceptor 4a (389 aa).

Topologically, residues 1-36 (MSESVGCCDSVSQCFFDYYTSKILIIRSKKVGTLNR) are cytoplasmic. A helical transmembrane segment spans residues 37-57 (FTQALVIAYVIGYVCVYNKGY). Residues 58 to 343 (QDTDTVLSSV…NIIPTLLNMG (286 aa)) lie on the Extracellular side of the membrane. ATP is bound by residues Lys-70 and Lys-72. Positions 70 and 72 each coordinate CTP. N-linked (GlcNAc...) asparagine glycans are attached at residues Asn-78 and Asn-113. 3 cysteine pairs are disulfide-bonded: Cys-119/Cys-168, Cys-129/Cys-152, and Cys-135/Cys-162. Residue Arg-143 coordinates CTP. A glycan (N-linked (GlcNAc...) asparagine) is linked at Asn-187. ATP-binding residues include Thr-189 and Leu-191. Thr-189 is a CTP binding site. Asn-213 carries an N-linked (GlcNAc...) asparagine glycan. 2 disulfides stabilise this stretch: Cys-220–Cys-230 and Cys-264–Cys-273. Positions 296, 298, and 316 each coordinate ATP. CTP-binding residues include Asn-296, Arg-298, and Lys-316. A helical membrane pass occupies residues 344-364 (AGLALLGLVNVICDWIVLTFM). At 365–389 (KRKQHYKEQKYTYVDDFGLLHNEDK) the chain is on the cytoplasmic side.

The protein belongs to the P2X receptor family. In terms of assembly, functional P2XRs are organized as homomeric and heteromeric trimers. Forms homotrimer.

Its subcellular location is the cell membrane. It is found in the lysosome membrane. It catalyses the reaction K(+)(in) = K(+)(out). It carries out the reaction Na(+)(in) = Na(+)(out). The enzyme catalyses Ca(2+)(in) = Ca(2+)(out). With respect to regulation, activated by ATP. pH-dependent and inhibited by acidic pH. ATP-gated nonselective transmembrane cation channel permeable to potassium, sodium and calcium. CTP, but not GTP or UTP, functions as a weak affinity agonist for P2RX4. Activated by extracellularly released ATP, it plays multiple role in immunity and central nervous system physiology. Could also function as an ATP-gated cation channel of lysosomal membranes. The sequence is that of P2X purinoceptor 4a (p2rx4a) from Danio rerio (Zebrafish).